The following is a 288-amino-acid chain: RanBP2-type zinc finger protein At1g67325 (288 aa).

Positions 1–11 are enriched in polar residues; sequence MSQVDNRNSSA. Disordered stretches follow at residues 1–24, 52–77, 176–198, 222–248, and 265–288; these read MSQV…RRED, PADH…GAYL, MPRP…DNDW, PKPG…WKCD, and NCGA…ENDQ. The span at 15–24 shows a compositional bias: basic and acidic residues; the sequence is ARTDGGRRED. RanBP2-type zinc fingers lie at residues 22 to 53, 194 to 225, and 241 to 272; these read REDD…PRPA, RDND…PKPG, and PEGS…DKPG. Over residues 181–197 the composition is skewed to basic and acidic residues; that stretch reads FYPDEKSQKRDSTRDND. The span at 223–241 shows a compositional bias: polar residues; sequence KPGSQQGGSSDKISKQNAP. Residue Ser278 is modified to Phosphoserine.

The polypeptide is RanBP2-type zinc finger protein At1g67325 (Arabidopsis thaliana (Mouse-ear cress)).